The sequence spans 523 residues: Ribonuclease Y (523 aa).

The chain crosses the membrane as a helical span at residues 28–48 (TYYIVATIIIAVIAVYVDYYI). The region spanning 227–312 (TVYVVNLPND…EMVEKAKKEV (86 aa)) is the KH domain. Residues 353–446 (VLKHSIEVSY…VQAADAISAA (94 aa)) enclose the HD domain.

This sequence belongs to the RNase Y family.

The protein localises to the cell membrane. Its function is as follows. Endoribonuclease that initiates mRNA decay. This is Ribonuclease Y from Clostridium tetani (strain Massachusetts / E88).